Consider the following 436-residue polypeptide: Methyl-accepting chemotaxis protein Amb0994 (436 aa).

The Cytoplasmic portion of the chain corresponds to 1–8; it reads METTLGSY. A helical membrane pass occupies residues 9 to 29; sequence ARTLSLGMLVPSAICLLAGTF. A topological domain (periplasmic) is located at residue glycine 30. Residues 31 to 51 traverse the membrane as a helical segment; sequence LLGGSSIALWVVIAVSLLGVV. Topologically, residues 52–436 are cytoplasmic; that stretch reads GGVKIGGSAR…DGFIARIGGR (385 aa). The 237-residue stretch at 180–416 folds into the Methyl-accepting transducer domain; it reads AATELEASSG…QVADAASELS (237 aa). Glutamine 211 bears the Glutamate methyl ester (Gln) mark. Glutamate 225 bears the Glutamate methyl ester (Glu) mark. Residues 321-436 form a required for interaction with MamK and to respond to the magnetic field region; the sequence is TEDITSQVAH…DGFIARIGGR (116 aa).

Belongs to the methyl-accepting chemotaxis (MCP) protein family. In terms of assembly, interacts with MamK at cell poles and septa.

The protein localises to the cell inner membrane. In terms of biological role, probable methyl-accepting taxis protein. May be the receptor that senses the torque generated from the interaction between the magnetosome dipole moment and the external magnetic field. Overproduction interferes with magnetotaxis, cells respond more slowly to changes in the magnetic field; requires the MamK-interacting C-terminus of the protein. The effect of magnetic sensing is to control flagellar rotation. Chemotactic-signal transducers respond to changes in the concentration of attractants and repellents in the environment, transduce a signal from the outside to the inside of the cell, and facilitate sensory adaptation through variation of methylation levels. Attractants increase the level of methylation while repellents decrease the level of methylation. The sequence is that of Methyl-accepting chemotaxis protein Amb0994 from Paramagnetospirillum magneticum (strain ATCC 700264 / AMB-1) (Magnetospirillum magneticum).